A 763-amino-acid polypeptide reads, in one-letter code: Lysine-specific histone demethylase 1 homolog 2 (763 aa).

Residues 53–152 enclose the SWIRM domain; the sequence is QRETETEALI…FGVSAAFPAS (100 aa). FAD is bound by residues glutamate 192, arginine 194, arginine 200, and glutamate 571.

Belongs to the flavin monoamine oxidase family. Requires FAD as cofactor.

In terms of biological role, probable histone demethylase. This is Lysine-specific histone demethylase 1 homolog 2 from Oryza sativa subsp. japonica (Rice).